The chain runs to 580 residues: Glutamine--tRNA ligase (580 aa).

Residues 51–61 (PEPNGYLHIGH) carry the 'HIGH' region motif. Residues 52–54 (EPN) and 58–64 (HIGHAKS) each bind ATP. 2 residues coordinate L-glutamine: Asp-84 and Tyr-233. Residues Thr-252 and 287–288 (RL) each bind ATP. The short motif at 294-298 (ITSKR) is the 'KMSKS' region element.

It belongs to the class-I aminoacyl-tRNA synthetase family. Monomer.

It is found in the cytoplasm. The enzyme catalyses tRNA(Gln) + L-glutamine + ATP = L-glutaminyl-tRNA(Gln) + AMP + diphosphate. The polypeptide is Glutamine--tRNA ligase (Ralstonia nicotianae (strain ATCC BAA-1114 / GMI1000) (Ralstonia solanacearum)).